A 297-amino-acid polypeptide reads, in one-letter code: Protoheme IX farnesyltransferase 1 (297 aa).

A run of 9 helical transmembrane segments spans residues 23 to 43 (VVVLMLITSLAGMFLATRAGV), 45 to 65 (WSVLLFGNLGIGLCAGGAAVV), 93 to 113 (LPALLFALALALLGMVLLLVF), 117 to 137 (LTAWLTLASLLGYAVLYTGFL), 145 to 165 (IVIGGLAGAAPPLLGWVAVSG), 171 to 191 (PLLLVLIIFAWTPPHFWALAI), 216 to 236 (LHILLYTLILLAVSLLPYAIH), 241 to 261 (LYLACALGLGLRFLHWAWVLY), and 277 to 297 (IGYLFALFIALLLDHYLLLSL).

It belongs to the UbiA prenyltransferase family. Protoheme IX farnesyltransferase subfamily.

Its subcellular location is the cell inner membrane. The catalysed reaction is heme b + (2E,6E)-farnesyl diphosphate + H2O = Fe(II)-heme o + diphosphate. Its pathway is porphyrin-containing compound metabolism; heme O biosynthesis; heme O from protoheme: step 1/1. In terms of biological role, converts heme B (protoheme IX) to heme O by substitution of the vinyl group on carbon 2 of heme B porphyrin ring with a hydroxyethyl farnesyl side group. The chain is Protoheme IX farnesyltransferase 1 from Pseudomonas putida (strain ATCC 700007 / DSM 6899 / JCM 31910 / BCRC 17059 / LMG 24140 / F1).